The following is a 147-amino-acid chain: Cell division protein SepF 1 (147 aa).

This sequence belongs to the SepF family. Homodimer. Interacts with FtsZ.

The protein resides in the cytoplasm. In terms of biological role, cell division protein that is part of the divisome complex and is recruited early to the Z-ring. Probably stimulates Z-ring formation, perhaps through the cross-linking of FtsZ protofilaments. Its function overlaps with FtsA. The protein is Cell division protein SepF 1 of Desulforamulus reducens (strain ATCC BAA-1160 / DSM 100696 / MI-1) (Desulfotomaculum reducens).